The following is a 742-amino-acid chain: UPF0313 protein MA_4618 (742 aa).

The interval 1–125 (MGVRKQTMVK…SFSSSLPASK (125 aa)) is disordered. The interval 1 to 128 (MGVRKQTMVK…SSLPASKFLP (128 aa)) is unknown. Basic and acidic residues-rich tracts occupy residues 17 to 40 (ENKK…ERAG) and 49 to 73 (KKVE…KAEG). A compositionally biased stretch (basic residues) spans 106–115 (TGKKEKKQKK). The segment at 129 to 742 (MSPEEVKARG…KCLIRRKEKQ (614 aa)) is UPF0313. A Radical SAM core domain is found at 438-707 (ALEMVKFSLT…AMQRALMHYR (270 aa)). Positions 452, 456, and 459 each coordinate [4Fe-4S] cluster.

The protein in the C-terminal section; belongs to the UPF0313 family. [4Fe-4S] cluster serves as cofactor.

This chain is UPF0313 protein MA_4618, found in Methanosarcina acetivorans (strain ATCC 35395 / DSM 2834 / JCM 12185 / C2A).